A 621-amino-acid chain; its full sequence is MSNKESTSYNLLVHLADLPTQSGIYQFFDNEDTLLYVGKAKNLKNRIKSYLSIENKHIVPKNNLSPRIALMVSQITRIHTLLTNNEQDALILENSLIKSLKPKYNILLRDDKTYPYIYIDKSLPYPRFELTRQVLKSNQIQYFGPFVSGARELLDSLYDNLPLVQKKSCVKGKKACIFHQIHKCPAPCENKVSIQTYAQTIAQGIALIEDKKALLKILESKMHTLSHNLQFEEAAIMRDRIQKITQMKNQSIIDMMSGDYDVFVLQEQDCGKNSQDSHKKSHTALHTHILMMLFIRNGRIISSDFILLHDDIQSHNLPQLYTQALLNHYKTQIPLLPQEILIPPFDFPDLLHLQQLLREQTRSSLKIVQPQRGAKKDLLQLAHKNALEIRRLHTQQNNTFSTLVSIKELCVLSQIPYSIEVFDTSHHSGTHNVGGMIVYENDDFIRSKYRRYELHTSDEYSQMHEMLLRRAQSFDSNPPPALWLLDGGRAQINLALDILKSVGANVEVLAIAKMKHNAKAYRAKGNAFDILRSKNAEFKLKPNDKRLQFLQKLRDEVHRYAITYHRYKKQKDIQKAQMMGKNYTQAQIKKLLDYFGSFESLKTASQEQINSVLSRRNRSDT.

Positions 20–106 (TQSGIYQFFD…IKSLKPKYNI (87 aa)) constitute a GIY-YIG domain. One can recognise a UVR domain in the interval 212–247 (KALLKILESKMHTLSHNLQFEEAAIMRDRIQKITQM).

The protein belongs to the UvrC family. In terms of assembly, interacts with UvrB in an incision complex.

The protein localises to the cytoplasm. Its function is as follows. The UvrABC repair system catalyzes the recognition and processing of DNA lesions. UvrC both incises the 5' and 3' sides of the lesion. The N-terminal half is responsible for the 3' incision and the C-terminal half is responsible for the 5' incision. This chain is UvrABC system protein C, found in Helicobacter hepaticus (strain ATCC 51449 / 3B1).